A 357-amino-acid polypeptide reads, in one-letter code: UDP-N-acetylglucosamine--N-acetylmuramyl-(pentapeptide) pyrophosphoryl-undecaprenol N-acetylglucosamine transferase (357 aa).

Residues 15–17 (TGG), asparagine 123, arginine 164, serine 190, and glutamine 284 contribute to the UDP-N-acetyl-alpha-D-glucosamine site.

This sequence belongs to the glycosyltransferase 28 family. MurG subfamily.

Its subcellular location is the cell inner membrane. The catalysed reaction is di-trans,octa-cis-undecaprenyl diphospho-N-acetyl-alpha-D-muramoyl-L-alanyl-D-glutamyl-meso-2,6-diaminopimeloyl-D-alanyl-D-alanine + UDP-N-acetyl-alpha-D-glucosamine = di-trans,octa-cis-undecaprenyl diphospho-[N-acetyl-alpha-D-glucosaminyl-(1-&gt;4)]-N-acetyl-alpha-D-muramoyl-L-alanyl-D-glutamyl-meso-2,6-diaminopimeloyl-D-alanyl-D-alanine + UDP + H(+). It participates in cell wall biogenesis; peptidoglycan biosynthesis. Cell wall formation. Catalyzes the transfer of a GlcNAc subunit on undecaprenyl-pyrophosphoryl-MurNAc-pentapeptide (lipid intermediate I) to form undecaprenyl-pyrophosphoryl-MurNAc-(pentapeptide)GlcNAc (lipid intermediate II). The sequence is that of UDP-N-acetylglucosamine--N-acetylmuramyl-(pentapeptide) pyrophosphoryl-undecaprenol N-acetylglucosamine transferase from Synechococcus elongatus (strain ATCC 33912 / PCC 7942 / FACHB-805) (Anacystis nidulans R2).